The primary structure comprises 414 residues: Proton/glutamate-aspartate symporter (414 aa).

The Cytoplasmic portion of the chain corresponds to 1–3 (MKK). Residues 4–24 (LIAFQILIALAVGAVIGHFFP) form a helical membrane-spanning segment. The Extracellular portion of the chain corresponds to 25–42 (DFGMALRPVGDGFIRLIK). The helical transmembrane segment at 43–63 (MIVVPIVFSTIVIGAAGSGSM) threads the bilayer. Topologically, residues 64–73 (KKMGSLGIKT) are cytoplasmic. Residues 74 to 94 (IIWFEVITTLVLGLGLLLANV) traverse the membrane as a helical segment. The Extracellular portion of the chain corresponds to 95 to 144 (LKPGVGLDLSHLAKKDIHELSGYTDKVVDFKQMILDIIPTNIIDVMARND). The helical transmembrane segment at 145 to 165 (LLAVIFFAILFGVAAAGIGKA) threads the bilayer. Over 166–182 (SEPVMKFFESTAQIMFK) the chain is Cytoplasmic. A helical transmembrane segment spans residues 183 to 203 (LTQIVMVTAPIGVLALMAASV). Topologically, residues 204–219 (GQYGIELLLPMFKLVG) are extracellular. The helical transmembrane segment at 220–240 (TVFLGLFLILFVLFPLVGLIF) threads the bilayer. Residue Gln-241 is a topological domain, cytoplasmic. Residues 242-262 (IKYFEVLKMIWDLFLIAFSTT) form a helical membrane-spanning segment. Residues 263 to 300 (STETILPQLMDRMEKYGCPKRVVSFVVPSGLSLNCDGS) lie on the Extracellular side of the membrane. The chain crosses the membrane as a helical span at residues 301–321 (SLYLSVSCIFLAQAFQVDMTL). The Cytoplasmic segment spans residues 322 to 324 (SQQ). 2 helical membrane-spanning segments follow: residues 325–345 (LLMM…PSGS) and 346–366 (LVVL…VAII). The Cytoplasmic segment spans residues 367–414 (AGVDRVMDMARTGVNVPGHAIACIVVSKWEKAFRQKEWVSANSQTESI).

This sequence belongs to the dicarboxylate/amino acid:cation symporter (DAACS) (TC 2.A.23) family.

The protein localises to the cell membrane. Its activity is regulated as follows. Glutamate uptake is inhibited by beta-hydroxyaspartate and cysteic acid. In terms of biological role, catalyzes the proton-dependent, binding-protein-independent transport of glutamate and aspartate. The protein is Proton/glutamate-aspartate symporter of Bacillus subtilis (strain 168).